A 119-amino-acid polypeptide reads, in one-letter code: Protein phosphatase EYA1 (119 aa).

It belongs to the HAD-like hydrolase superfamily. EYA family. Mg(2+) is required as a cofactor.

The protein resides in the cytoplasm. Its subcellular location is the nucleus. It carries out the reaction O-phospho-L-tyrosyl-[protein] + H2O = L-tyrosyl-[protein] + phosphate. The enzyme catalyses O-phospho-L-seryl-[protein] + H2O = L-seryl-[protein] + phosphate. The catalysed reaction is O-phospho-L-threonyl-[protein] + H2O = L-threonyl-[protein] + phosphate. Its function is as follows. Functions both as protein phosphatase and as transcriptional coactivator for SIX1, and probably also for other transcription factors of this family. Tyrosine phosphatase that dephosphorylates 'Tyr-142' of histone H2AX (H2AXY142ph) and promotes efficient DNA repair via the recruitment of DNA repair complexes containing MDC1. 'Tyr-142' phosphorylation of histone H2AX plays a central role in DNA repair and acts as a mark that distinguishes between apoptotic and repair responses to genotoxic stress. Its function as histone phosphatase may contribute to its function in transcription regulation during organogenesis. Also has phosphatase activity with proteins phosphorylated on Ser and Thr residues (in vitro). Required for normal embryonic development of the skeleton, kidneys and ears. The chain is Protein phosphatase EYA1 (EYA1) from Gallus gallus (Chicken).